The chain runs to 366 residues: Acetylserotonin O-methyltransferase 3 (366 aa).

Residues glycine 209, aspartate 232, aspartate 253, and lysine 267 each contribute to the S-adenosyl-L-homocysteine site. The active-site Proton acceptor is histidine 271. Residues glutamate 302 and glutamate 332 contribute to the active site.

It belongs to the class I-like SAM-binding methyltransferase superfamily. Cation-independent O-methyltransferase family. Homodimer. Expressed at low levels in roots, shoots, leaves, stems and flowers.

The protein resides in the cytoplasm. The enzyme catalyses N-acetylserotonin + S-adenosyl-L-methionine = melatonin + S-adenosyl-L-homocysteine + H(+). The protein operates within aromatic compound metabolism; melatonin biosynthesis; melatonin from serotonin: step 1/2. Methyltransferase which catalyzes the transfer of a methyl group onto N-acetylserotonin, producing melatonin (N-acetyl-5-methoxytryptamine). The protein is Acetylserotonin O-methyltransferase 3 of Oryza sativa subsp. japonica (Rice).